The sequence spans 391 residues: Elongation factor Tu (391 aa).

The tr-type G domain maps to 10–201; it reads KPHVNIGTIG…AVDDYIPTPE (192 aa). The G1 stretch occupies residues 19 to 26; the sequence is GHVDHGKT. GTP is bound at residue 19–26; sequence GHVDHGKT. T26 contributes to the Mg(2+) binding site. A G2 region spans residues 55–59; it reads GITIS. The segment at 76 to 79 is G3; that stretch reads DCPG. Residues 76–80 and 131–134 each bind GTP; these read DCPGH and NKCD. The tract at residues 131–134 is G4; sequence NKCD. Residues 169 to 171 are G5; that stretch reads SAL.

The protein belongs to the TRAFAC class translation factor GTPase superfamily. Classic translation factor GTPase family. EF-Tu/EF-1A subfamily. Monomer.

The protein localises to the cytoplasm. The catalysed reaction is GTP + H2O = GDP + phosphate + H(+). Its function is as follows. GTP hydrolase that promotes the GTP-dependent binding of aminoacyl-tRNA to the A-site of ribosomes during protein biosynthesis. The sequence is that of Elongation factor Tu from Brucella anthropi (strain ATCC 49188 / DSM 6882 / CCUG 24695 / JCM 21032 / LMG 3331 / NBRC 15819 / NCTC 12168 / Alc 37) (Ochrobactrum anthropi).